The sequence spans 230 residues: Metaxin-2 homolog (230 aa).

It belongs to the metaxin family. As to quaternary structure, associates with the mitochondrial contact site and cristae organizing system (MICOS) complex (also known as MINOS or MitOS complex).

It localises to the mitochondrion outer membrane. Involved in transport of proteins into the mitochondrion. The protein is Metaxin-2 homolog (mtx-2) of Caenorhabditis elegans.